A 245-amino-acid chain; its full sequence is Ribosomal RNA small subunit methyltransferase G (245 aa).

Residues Gly-90, Leu-95, 140–141 (AE), and Arg-158 contribute to the S-adenosyl-L-methionine site.

Belongs to the methyltransferase superfamily. RNA methyltransferase RsmG family.

It is found in the cytoplasm. Specifically methylates the N7 position of guanine in position 518 of 16S rRNA. The sequence is that of Ribosomal RNA small subunit methyltransferase G from Mycobacterium leprae (strain TN).